A 192-amino-acid chain; its full sequence is Probable GTP-binding protein EngB (192 aa).

In terms of domain architecture, EngB-type G spans 22–192; sequence NLPQIVIVGR…QVLSIFEKYA (171 aa). Residues 30–37, 57–61, 75–78, 142–145, and 173–175 contribute to the GTP site; these read GRSNVGKS, GKTRG, DLPG, TKAD, and FSA. Mg(2+) contacts are provided by Ser37 and Thr59.

This sequence belongs to the TRAFAC class TrmE-Era-EngA-EngB-Septin-like GTPase superfamily. EngB GTPase family. Mg(2+) is required as a cofactor.

Functionally, necessary for normal cell division and for the maintenance of normal septation. The chain is Probable GTP-binding protein EngB from Thermoanaerobacter pseudethanolicus (strain ATCC 33223 / 39E) (Clostridium thermohydrosulfuricum).